The chain runs to 425 residues: Multifunctional CCA protein (425 aa).

ATP-binding residues include Gly8 and Arg11. Residues Gly8 and Arg11 each coordinate CTP. Mg(2+) is bound by residues Asp21 and Asp23. Positions 91, 141, and 144 each coordinate ATP. Positions 91, 141, and 144 each coordinate CTP. An HD domain is found at 230–331 (TGVHLMMVLD…VRLLERCDAI (102 aa)).

It belongs to the tRNA nucleotidyltransferase/poly(A) polymerase family. Bacterial CCA-adding enzyme type 1 subfamily. In terms of assembly, monomer. Can also form homodimers and oligomers. It depends on Mg(2+) as a cofactor. Ni(2+) serves as cofactor.

It catalyses the reaction a tRNA precursor + 2 CTP + ATP = a tRNA with a 3' CCA end + 3 diphosphate. The enzyme catalyses a tRNA with a 3' CCA end + 2 CTP + ATP = a tRNA with a 3' CCACCA end + 3 diphosphate. Catalyzes the addition and repair of the essential 3'-terminal CCA sequence in tRNAs without using a nucleic acid template. Adds these three nucleotides in the order of C, C, and A to the tRNA nucleotide-73, using CTP and ATP as substrates and producing inorganic pyrophosphate. tRNA 3'-terminal CCA addition is required both for tRNA processing and repair. Also involved in tRNA surveillance by mediating tandem CCA addition to generate a CCACCA at the 3' terminus of unstable tRNAs. While stable tRNAs receive only 3'-terminal CCA, unstable tRNAs are marked with CCACCA and rapidly degraded. The sequence is that of Multifunctional CCA protein from Acidovorax ebreus (strain TPSY) (Diaphorobacter sp. (strain TPSY)).